A 547-amino-acid chain; its full sequence is Glucose-6-phosphate isomerase (547 aa).

The active-site Proton donor is glutamate 351. Residues histidine 382 and lysine 511 contribute to the active site.

This sequence belongs to the GPI family.

It localises to the cytoplasm. It catalyses the reaction alpha-D-glucose 6-phosphate = beta-D-fructose 6-phosphate. Its pathway is carbohydrate biosynthesis; gluconeogenesis. It functions in the pathway carbohydrate degradation; glycolysis; D-glyceraldehyde 3-phosphate and glycerone phosphate from D-glucose: step 2/4. Catalyzes the reversible isomerization of glucose-6-phosphate to fructose-6-phosphate. In Xanthobacter autotrophicus (strain ATCC BAA-1158 / Py2), this protein is Glucose-6-phosphate isomerase.